A 612-amino-acid polypeptide reads, in one-letter code: Dihydroxy-acid dehydratase (612 aa).

Residue D81 participates in Mg(2+) binding. C122 serves as a coordination point for [2Fe-2S] cluster. Positions 123 and 124 each coordinate Mg(2+). K124 carries the N6-carboxylysine modification. C193 provides a ligand contact to [2Fe-2S] cluster. E489 serves as a coordination point for Mg(2+). S515 functions as the Proton acceptor in the catalytic mechanism.

This sequence belongs to the IlvD/Edd family. As to quaternary structure, homodimer. Requires [2Fe-2S] cluster as cofactor. It depends on Mg(2+) as a cofactor.

It carries out the reaction (2R)-2,3-dihydroxy-3-methylbutanoate = 3-methyl-2-oxobutanoate + H2O. The catalysed reaction is (2R,3R)-2,3-dihydroxy-3-methylpentanoate = (S)-3-methyl-2-oxopentanoate + H2O. It functions in the pathway amino-acid biosynthesis; L-isoleucine biosynthesis; L-isoleucine from 2-oxobutanoate: step 3/4. Its pathway is amino-acid biosynthesis; L-valine biosynthesis; L-valine from pyruvate: step 3/4. Functionally, functions in the biosynthesis of branched-chain amino acids. Catalyzes the dehydration of (2R,3R)-2,3-dihydroxy-3-methylpentanoate (2,3-dihydroxy-3-methylvalerate) into 2-oxo-3-methylpentanoate (2-oxo-3-methylvalerate) and of (2R)-2,3-dihydroxy-3-methylbutanoate (2,3-dihydroxyisovalerate) into 2-oxo-3-methylbutanoate (2-oxoisovalerate), the penultimate precursor to L-isoleucine and L-valine, respectively. The polypeptide is Dihydroxy-acid dehydratase (Teredinibacter turnerae (strain ATCC 39867 / T7901)).